The sequence spans 122 residues: Large ribosomal subunit protein uL14 (122 aa).

Belongs to the universal ribosomal protein uL14 family. In terms of assembly, part of the 50S ribosomal subunit. Forms a cluster with proteins L3 and L19. In the 70S ribosome, L14 and L19 interact and together make contacts with the 16S rRNA in bridges B5 and B8.

In terms of biological role, binds to 23S rRNA. Forms part of two intersubunit bridges in the 70S ribosome. This is Large ribosomal subunit protein uL14 from Christiangramia forsetii (strain DSM 17595 / CGMCC 1.15422 / KT0803) (Gramella forsetii).